Reading from the N-terminus, the 206-residue chain is Small ribosomal subunit protein uS4 (206 aa).

One can recognise an S4 RNA-binding domain in the interval 96-156; the sequence is GRLDNVVYRM…EKAKKQSRVK (61 aa).

This sequence belongs to the universal ribosomal protein uS4 family. Part of the 30S ribosomal subunit. Contacts protein S5. The interaction surface between S4 and S5 is involved in control of translational fidelity.

One of the primary rRNA binding proteins, it binds directly to 16S rRNA where it nucleates assembly of the body of the 30S subunit. In terms of biological role, with S5 and S12 plays an important role in translational accuracy. In Enterobacter sp. (strain 638), this protein is Small ribosomal subunit protein uS4.